The sequence spans 152 residues: Transcriptional regulator MraZ (152 aa).

SpoVT-AbrB domains are found at residues 5-52 and 81-124; these read ATQI…TLSE and ASEC…DEQA.

The protein belongs to the MraZ family. In terms of assembly, forms oligomers.

It is found in the cytoplasm. The protein localises to the nucleoid. Its function is as follows. Negatively regulates its own expression and that of the subsequent genes in the proximal part of the division and cell wall (dcw) gene cluster. Acts by binding directly to DNA. May also regulate the expression of genes outside the dcw cluster. The polypeptide is Transcriptional regulator MraZ (Photorhabdus laumondii subsp. laumondii (strain DSM 15139 / CIP 105565 / TT01) (Photorhabdus luminescens subsp. laumondii)).